The following is a 157-amino-acid chain: MEYSIRQEQQRVVAGFHMVGPWEQTVKQGFEQLMMWVDGRDIPAKEWLAVYYDNPDEVPAEKLRCDTVVTVEPGFQIPANSEGVMLTQVSGGEYAVASARVVNHDFATPWYQFFGSVLADTAWEMAAKPCFERYLNDGNQDGYWDIEMYIAVSRRAG.

This sequence belongs to the DNA gyrase inhibitor family. As to quaternary structure, interacts with DNA gyrase.

Its subcellular location is the cytoplasm. Inhibits the supercoiling activity of DNA gyrase. Acts by inhibiting DNA gyrase at an early step, prior to (or at the step of) binding of DNA by the gyrase. It protects cells against toxins that target DNA gyrase, by inhibiting activity of these toxins and reducing the formation of lethal double-strand breaks in the cell. This Enterobacter lignolyticus (strain SCF1) protein is DNA gyrase inhibitor.